The chain runs to 717 residues: Fatty acid oxidation complex subunit alpha (717 aa).

Residues 1 to 190 are enoyl-CoA hydratase; the sequence is MESTSAFNLQ…KAGLVDDVVP (190 aa). The interval 306 to 717 is 3-hydroxyacyl-CoA dehydrogenase; sequence RALHSVGVLG…AGNLQAEMTV (412 aa).

The protein in the N-terminal section; belongs to the enoyl-CoA hydratase/isomerase family. This sequence in the central section; belongs to the 3-hydroxyacyl-CoA dehydrogenase family. Heterotetramer of two alpha chains (FadJ) and two beta chains (FadI).

The protein localises to the cytoplasm. It carries out the reaction a (3S)-3-hydroxyacyl-CoA = a (2E)-enoyl-CoA + H2O. The catalysed reaction is a 4-saturated-(3S)-3-hydroxyacyl-CoA = a (3E)-enoyl-CoA + H2O. It catalyses the reaction a (3S)-3-hydroxyacyl-CoA + NAD(+) = a 3-oxoacyl-CoA + NADH + H(+). The enzyme catalyses (3S)-3-hydroxybutanoyl-CoA = (3R)-3-hydroxybutanoyl-CoA. The protein operates within lipid metabolism; fatty acid beta-oxidation. Its function is as follows. Catalyzes the formation of a hydroxyacyl-CoA by addition of water on enoyl-CoA. Also exhibits 3-hydroxyacyl-CoA epimerase and 3-hydroxyacyl-CoA dehydrogenase activities. This is Fatty acid oxidation complex subunit alpha from Cronobacter sakazakii (strain ATCC BAA-894) (Enterobacter sakazakii).